Here is a 472-residue protein sequence, read N- to C-terminus: tRNA modification GTPase MnmE (472 aa).

3 residues coordinate (6S)-5-formyl-5,6,7,8-tetrahydrofolate: Arg-28, Glu-91, and Lys-130. The TrmE-type G domain maps to 225-391; the sequence is GAKVVLAGKT…LSEKAYSVLA (167 aa). Residue Asn-235 participates in K(+) binding. Residues 235 to 240, 254 to 260, and 279 to 282 each bind GTP; these read NAGKSS, SDIHGTT, and DTAG. Ser-239 serves as a coordination point for Mg(2+). K(+)-binding residues include Ser-254, Ile-256, and Thr-259. Thr-260 is a Mg(2+) binding site. Lys-472 contributes to the (6S)-5-formyl-5,6,7,8-tetrahydrofolate binding site.

It belongs to the TRAFAC class TrmE-Era-EngA-EngB-Septin-like GTPase superfamily. TrmE GTPase family. As to quaternary structure, homodimer. Heterotetramer of two MnmE and two MnmG subunits. It depends on K(+) as a cofactor.

It localises to the cytoplasm. Functionally, exhibits a very high intrinsic GTPase hydrolysis rate. Involved in the addition of a carboxymethylaminomethyl (cmnm) group at the wobble position (U34) of certain tRNAs, forming tRNA-cmnm(5)s(2)U34. The polypeptide is tRNA modification GTPase MnmE (Treponema denticola (strain ATCC 35405 / DSM 14222 / CIP 103919 / JCM 8153 / KCTC 15104)).